We begin with the raw amino-acid sequence, 524 residues long: uncharacterized protein (524 aa).

A signal peptide spans 1–21; that stretch reads MLLRSVWYKLGSLLIILPLTG. A lipid anchor (N-palmitoyl cysteine) is attached at Cys22. Cys22 is lipidated: S-diacylglycerol cysteine.

It belongs to the MG067/MG068/MG395 family.

The protein localises to the cell membrane. This is an uncharacterized protein from Mycoplasma pneumoniae (strain ATCC 29342 / M129 / Subtype 1) (Mycoplasmoides pneumoniae).